Consider the following 734-residue polypeptide: Photosystem I P700 chlorophyll a apoprotein A2 (734 aa).

Helical transmembrane passes span Ile46–Ala69, Leu135–Gln158, Leu175–Ile199, Ile273–Tyr291, Leu330–Tyr353, Ala369–Ile395, Ala417–His439, and Phe517–Val535. Cys559 and Cys568 together coordinate [4Fe-4S] cluster. Transmembrane regions (helical) follow at residues Ala575–Trp596 and Leu643–Ile665. Chlorophyll a-binding residues include His654, Met662, and Tyr670. Trp671 is a binding site for phylloquinone. A helical membrane pass occupies residues Leu707–Ala727.

The protein belongs to the PsaA/PsaB family. The PsaA/B heterodimer binds the P700 chlorophyll special pair and subsequent electron acceptors. PSI consists of a core antenna complex that captures photons, and an electron transfer chain that converts photonic excitation into a charge separation. The eukaryotic PSI reaction center is composed of at least 11 subunits. The cofactor is P700 is a chlorophyll a/chlorophyll a' dimer, A0 is one or more chlorophyll a, A1 is one or both phylloquinones and FX is a shared 4Fe-4S iron-sulfur center..

The protein resides in the plastid. The protein localises to the chloroplast thylakoid membrane. The catalysed reaction is reduced [plastocyanin] + hnu + oxidized [2Fe-2S]-[ferredoxin] = oxidized [plastocyanin] + reduced [2Fe-2S]-[ferredoxin]. Its function is as follows. PsaA and PsaB bind P700, the primary electron donor of photosystem I (PSI), as well as the electron acceptors A0, A1 and FX. PSI is a plastocyanin-ferredoxin oxidoreductase, converting photonic excitation into a charge separation, which transfers an electron from the donor P700 chlorophyll pair to the spectroscopically characterized acceptors A0, A1, FX, FA and FB in turn. Oxidized P700 is reduced on the lumenal side of the thylakoid membrane by plastocyanin. This Marchantia polymorpha (Common liverwort) protein is Photosystem I P700 chlorophyll a apoprotein A2.